Consider the following 39-residue polypeptide: Photosystem II reaction center protein L (39 aa).

A helical membrane pass occupies residues 18–38 (SLYLGLLVVFTTGILFSSYFF).

It belongs to the PsbL family. As to quaternary structure, PSII is composed of 1 copy each of membrane proteins PsbA, PsbB, PsbC, PsbD, PsbE, PsbF, PsbH, PsbI, PsbJ, PsbK, PsbL, PsbM, PsbT, PsbX, PsbY, PsbZ, Psb30/Ycf12, peripheral proteins PsbO, CyanoQ (PsbQ), PsbU, PsbV and a large number of cofactors. It forms dimeric complexes.

The protein localises to the cellular thylakoid membrane. Functionally, one of the components of the core complex of photosystem II (PSII). PSII is a light-driven water:plastoquinone oxidoreductase that uses light energy to abstract electrons from H(2)O, generating O(2) and a proton gradient subsequently used for ATP formation. It consists of a core antenna complex that captures photons, and an electron transfer chain that converts photonic excitation into a charge separation. This subunit is found at the monomer-monomer interface and is required for correct PSII assembly and/or dimerization. The sequence is that of Photosystem II reaction center protein L from Synechococcus sp. (strain WH7803).